The chain runs to 303 residues: Putative S-adenosyl-L-methionine-dependent methyltransferase ML2020 (303 aa).

Residues aspartate 130 and 159–160 (DL) each bind S-adenosyl-L-methionine.

This sequence belongs to the UPF0677 family.

Exhibits S-adenosyl-L-methionine-dependent methyltransferase activity. The chain is Putative S-adenosyl-L-methionine-dependent methyltransferase ML2020 from Mycobacterium leprae (strain TN).